We begin with the raw amino-acid sequence, 119 residues long: Dolichyl-diphosphooligosaccharide--protein glycosyltransferase subunit DAD1 (119 aa).

Position 2 is an N-acetylserine (serine 2). Residues 2–30 are Cytoplasmic-facing; the sequence is SASVASVISRFLEEYLSSTPQRLKLLDAY. A helical membrane pass occupies residues 31–51; the sequence is LLYILLTGALQFGYCLLVGTF. At 52 to 54 the chain is on the lumenal side; sequence PFN. Residues 55 to 75 traverse the membrane as a helical segment; the sequence is SFLSGFISCVGSFILAGNGSL. The Cytoplasmic portion of the chain corresponds to 76–81; that stretch reads RNRSNN. A helical transmembrane segment spans residues 82-98; the sequence is VFTLVRCFSSLVTLFYS. Residues 99-119 are Lumenal-facing; the sequence is RSPPREVPRGACIALFCERGN.

The protein belongs to the DAD/OST2 family. As to quaternary structure, component of the oligosaccharyltransferase (OST) complex. OST exists in two different complex forms which contain common core subunits RPN1, RPN2, OST48, OST4, DAD1 and TMEM258, either STT3A or STT3B as catalytic subunits, and form-specific accessory subunits. STT3A complex assembly occurs through the formation of 3 subcomplexes. Subcomplex 1 contains RPN1 and TMEM258, subcomplex 2 contains the STT3A-specific subunits STT3A, DC2/OSTC, and KCP2 as well as the core subunit OST4, and subcomplex 3 contains RPN2, DAD1, and OST48. The STT3A complex can form stable complexes with the Sec61 complex or with both the Sec61 and TRAP complexes.

It localises to the endoplasmic reticulum membrane. Its pathway is protein modification; protein glycosylation. Its function is as follows. Subunit of the oligosaccharyl transferase (OST) complex that catalyzes the initial transfer of a defined glycan (Glc(3)Man(9)GlcNAc(2) in eukaryotes) from the lipid carrier dolichol-pyrophosphate to an asparagine residue within an Asn-X-Ser/Thr consensus motif in nascent polypeptide chains, the first step in protein N-glycosylation. N-glycosylation occurs cotranslationally and the complex associates with the Sec61 complex at the channel-forming translocon complex that mediates protein translocation across the endoplasmic reticulum (ER). All subunits are required for a maximal enzyme activity. The polypeptide is Dolichyl-diphosphooligosaccharide--protein glycosyltransferase subunit DAD1 (Canis lupus familiaris (Dog)).